Here is a 539-residue protein sequence, read N- to C-terminus: Transcription factor LG2 (539 aa).

Positions 115–125 are enriched in polar residues; sequence MRQQQQLHSGN. Disordered stretches follow at residues 115–140 and 181–246; these read MRQQ…SAQN and KPGL…KSRL. 2 stretches are compositionally biased toward low complexity: residues 126–137 and 192–205; these read SQSVGSTTDSSS and QQQH…QQQL. Positions 219–242 are enriched in basic and acidic residues; sequence TRKDGKSVDAKTERRLAQNREAAR. The 45-residue stretch at 227-271 folds into the bZIP domain; the sequence is DAKTERRLAQNREAARKSRLRKKAYVQNLETSRVRLQQIEQELQR. The tract at residues 229-249 is basic motif; that stretch reads KTERRLAQNREAARKSRLRKK. Residues 255–269 form a leucine-zipper region; it reads LETSRVRLQQIEQEL. Residues 292–506 enclose the DOG1 domain; it reads AAMFDMEYAR…RALSNLWSSR (215 aa). A disordered region spans residues 513–539; the sequence is GTESVSPTGTELQPMHNQPQQNQYSGF.

The protein belongs to the bZIP family. As to quaternary structure, interacts with NPR1/NH1 and NPR3/NH3.

The protein localises to the nucleus. In terms of biological role, transcriptional regulator involved in defense response. Acts as a transcriptional activator in vitro. The chain is Transcription factor LG2 from Oryza sativa subsp. japonica (Rice).